Reading from the N-terminus, the 175-residue chain is Trafficking protein particle complex subunit 20 (175 aa).

The protein belongs to the TRAPP small subunits family. Sedlin subfamily. As to quaternary structure, part of the multisubunit TRAPP (transport protein particle) I complex composed of BET3, BET5, TRS20, TRS23, TRS31 and TRS33. Part of the multisubunit TRAPP (transport protein particle) II complex composed of BET3, BET5, TRS20, TRS23, TRS31, TRS33, TRS65, TRS85, TRS120 and TRS130. Part of the multisubunit TRAPP (transport protein particle) III complex composed of BET3, BET5, TRS20, TRS23, TRS31, TRS33 and TRS85.

The protein localises to the golgi apparatus. It is found in the cis-Golgi network. It localises to the endoplasmic reticulum. Its subcellular location is the preautophagosomal structure. Its function is as follows. Component of the TRAPP I, TRAPP II and TRAPP III complexes which act as guanine nucleotide exchange factors (GEF) for YPT1. TRAPP I plays a key role in the late stages of endoplasmic reticulum to Golgi traffic. TRAPP II plays a role in intra-Golgi transport. TRAPP III plays a role in autophagosome formation. The polypeptide is Trafficking protein particle complex subunit 20 (TRS20) (Saccharomyces cerevisiae (strain ATCC 204508 / S288c) (Baker's yeast)).